A 317-amino-acid chain; its full sequence is Ribosomal protein L11 methyltransferase (317 aa).

Positions 158, 179, 201, and 244 each coordinate S-adenosyl-L-methionine.

This sequence belongs to the methyltransferase superfamily. PrmA family.

The protein localises to the cytoplasm. It carries out the reaction L-lysyl-[protein] + 3 S-adenosyl-L-methionine = N(6),N(6),N(6)-trimethyl-L-lysyl-[protein] + 3 S-adenosyl-L-homocysteine + 3 H(+). Its function is as follows. Methylates ribosomal protein L11. The polypeptide is Ribosomal protein L11 methyltransferase (Streptococcus equi subsp. zooepidemicus (strain H70)).